Consider the following 377-residue polypeptide: 2-aminoethylphosphonate--pyruvate transaminase (377 aa).

An N6-(pyridoxal phosphate)lysine modification is found at lysine 194.

The protein belongs to the class-V pyridoxal-phosphate-dependent aminotransferase family. PhnW subfamily. As to quaternary structure, homodimer. Requires pyridoxal 5'-phosphate as cofactor.

It carries out the reaction (2-aminoethyl)phosphonate + pyruvate = phosphonoacetaldehyde + L-alanine. In terms of biological role, involved in phosphonate degradation. The polypeptide is 2-aminoethylphosphonate--pyruvate transaminase (Cupriavidus necator (strain ATCC 17699 / DSM 428 / KCTC 22496 / NCIMB 10442 / H16 / Stanier 337) (Ralstonia eutropha)).